The chain runs to 514 residues: Cobyric acid synthase (514 aa).

One can recognise a GATase cobBQ-type domain in the interval 263–457; the sequence is ALDVAVIRLP…LHGIFDNDPL (195 aa). The active-site Nucleophile is C344. Residue H449 is part of the active site.

The protein belongs to the CobB/CobQ family. CobQ subfamily.

It functions in the pathway cofactor biosynthesis; adenosylcobalamin biosynthesis. Its function is as follows. Catalyzes amidations at positions B, D, E, and G on adenosylcobyrinic A,C-diamide. NH(2) groups are provided by glutamine, and one molecule of ATP is hydrogenolyzed for each amidation. The sequence is that of Cobyric acid synthase from Desulfitobacterium hafniense (strain DSM 10664 / DCB-2).